The sequence spans 328 residues: Phenylalanine--tRNA ligase alpha subunit (328 aa).

Glu-253 is a binding site for Mg(2+).

This sequence belongs to the class-II aminoacyl-tRNA synthetase family. Phe-tRNA synthetase alpha subunit type 1 subfamily. In terms of assembly, tetramer of two alpha and two beta subunits. Mg(2+) serves as cofactor.

Its subcellular location is the cytoplasm. The catalysed reaction is tRNA(Phe) + L-phenylalanine + ATP = L-phenylalanyl-tRNA(Phe) + AMP + diphosphate + H(+). The polypeptide is Phenylalanine--tRNA ligase alpha subunit (Actinobacillus pleuropneumoniae serotype 5b (strain L20)).